The following is a 253-amino-acid chain: 3-deoxy-manno-octulosonate cytidylyltransferase (253 aa).

It belongs to the KdsB family.

It is found in the cytoplasm. The enzyme catalyses 3-deoxy-alpha-D-manno-oct-2-ulosonate + CTP = CMP-3-deoxy-beta-D-manno-octulosonate + diphosphate. The protein operates within nucleotide-sugar biosynthesis; CMP-3-deoxy-D-manno-octulosonate biosynthesis; CMP-3-deoxy-D-manno-octulosonate from 3-deoxy-D-manno-octulosonate and CTP: step 1/1. It participates in bacterial outer membrane biogenesis; lipopolysaccharide biosynthesis. Its function is as follows. Activates KDO (a required 8-carbon sugar) for incorporation into bacterial lipopolysaccharide in Gram-negative bacteria. The chain is 3-deoxy-manno-octulosonate cytidylyltransferase from Acinetobacter baumannii (strain ATCC 17978 / DSM 105126 / CIP 53.77 / LMG 1025 / NCDC KC755 / 5377).